Here is a 317-residue protein sequence, read N- to C-terminus: Ornithine carbamoyltransferase (317 aa).

Carbamoyl phosphate-binding positions include 54-57 (STRT), glutamine 81, arginine 105, and 132-135 (HPCQ). L-ornithine is bound by residues asparagine 163, aspartate 227, and 231 to 232 (SM). Carbamoyl phosphate contacts are provided by residues 267-268 (CL) and arginine 295.

It belongs to the aspartate/ornithine carbamoyltransferase superfamily. OTCase family.

It is found in the cytoplasm. It carries out the reaction carbamoyl phosphate + L-ornithine = L-citrulline + phosphate + H(+). Its pathway is amino-acid biosynthesis; L-arginine biosynthesis; L-arginine from L-ornithine and carbamoyl phosphate: step 1/3. Functionally, reversibly catalyzes the transfer of the carbamoyl group from carbamoyl phosphate (CP) to the N(epsilon) atom of ornithine (ORN) to produce L-citrulline. In Parafrankia sp. (strain EAN1pec), this protein is Ornithine carbamoyltransferase.